A 133-amino-acid polypeptide reads, in one-letter code: Egg protein CP422 (133 aa).

A signal peptide spans 1 to 21; it reads MHECMIVFFIFAVVSIYYADA. Intrachain disulfides connect C107–C121, C114–C125, and C120–C130.

Its subcellular location is the secreted. This is Egg protein CP422 (CP422) from Schistosoma japonicum (Blood fluke).